The chain runs to 626 residues: DNA polymerase 2 (626 aa).

This sequence belongs to the DNA polymerase type-B family.

The enzyme catalyses DNA(n) + a 2'-deoxyribonucleoside 5'-triphosphate = DNA(n+1) + diphosphate. In terms of biological role, this polymerase is devoid of exonuclease activity. This chain is DNA polymerase 2 (dpo2), found in Saccharolobus solfataricus (strain ATCC 35092 / DSM 1617 / JCM 11322 / P2) (Sulfolobus solfataricus).